The primary structure comprises 43 residues: Protein PsbN (43 aa).

The chain crosses the membrane as a helical span at residues glycine 4–tyrosine 24.

It belongs to the PsbN family.

It is found in the plastid. It localises to the chloroplast thylakoid membrane. In terms of biological role, may play a role in photosystem I and II biogenesis. This chain is Protein PsbN, found in Coleochaete orbicularis (Charophycean green alga).